Consider the following 319-residue polypeptide: Probable casein kinase II subunit alpha homolog (319 aa).

The Protein kinase domain occupies 37–316; that stretch reads YQIYQRMGRG…ADECLRHPLF (280 aa). ATP is bound by residues 43 to 51 and K64; that span reads MGRGKYSEV. D151 acts as the Proton acceptor in catalysis.

The protein belongs to the protein kinase superfamily. Ser/Thr protein kinase family. CK2 subfamily. In terms of assembly, tetramer composed of two alpha chains, one beta chain and one beta' chain.

It catalyses the reaction L-seryl-[protein] + ATP = O-phospho-L-seryl-[protein] + ADP + H(+). It carries out the reaction L-threonyl-[protein] + ATP = O-phospho-L-threonyl-[protein] + ADP + H(+). Catalytic subunit of a constitutively active serine/threonine-protein kinase complex that phosphorylates a large number of substrates containing acidic residues C-terminal to the phosphorylated serine or threonine. The polypeptide is Probable casein kinase II subunit alpha homolog (CKA1) (Encephalitozoon cuniculi (strain GB-M1) (Microsporidian parasite)).